The chain runs to 192 residues: uncharacterized protein (192 aa).

A Nudix hydrolase domain is found at 29–160 (RRQAAVLIPL…PLDIQRRGHD (132 aa)). Residues 67-89 (GAVDSTDASLIAAALREAHEEVA) carry the Nudix box motif. Mg(2+) contacts are provided by glutamate 83 and glutamate 87.

It belongs to the Nudix hydrolase family. PCD1 subfamily. It depends on Mn(2+) as a cofactor. Mg(2+) serves as cofactor.

Probably mediates the hydrolysis of some nucleoside diphosphate derivatives. This is an uncharacterized protein from Enterobacter sp. (strain 638).